Consider the following 196-residue polypeptide: MADS-box transcription factor 32 (196 aa).

The 61-residue stretch at 1 to 61 folds into the MADS-box domain; it reads MGRGRSEIKR…GKLYHFLSPT (61 aa). Positions 85 to 175 constitute a K-box domain; sequence RQERRAELEK…CDKIAHAQTL (91 aa).

The protein localises to the nucleus. Its function is as follows. Probable transcription factor. The protein is MADS-box transcription factor 32 (MADS32) of Oryza sativa subsp. japonica (Rice).